The chain runs to 367 residues: Peptide chain release factor 2 (367 aa).

Position 254 is an N5-methylglutamine (Q254).

This sequence belongs to the prokaryotic/mitochondrial release factor family. Post-translationally, methylated by PrmC. Methylation increases the termination efficiency of RF2.

It localises to the cytoplasm. In terms of biological role, peptide chain release factor 2 directs the termination of translation in response to the peptide chain termination codons UGA and UAA. The polypeptide is Peptide chain release factor 2 (Leptospira interrogans serogroup Icterohaemorrhagiae serovar Lai (strain 56601)).